Consider the following 122-residue polypeptide: VQECVSEFISFITSEASERCHQEKRKTINGEDILFAMSTLGFDSYVEPLKLYLQKFREAMKGEKGIGGTVTTGDGLGEDLAEEPFTSQIPAGLITTDGQQQNVMVYTTSYQQISGVQQIQFS.

The subunit association domain (SAD) stretch occupies residues 1 to 12 (VQECVSEFISFI). Positions 1–57 (VQECVSEFISFITSEASERCHQEKRKTINGEDILFAMSTLGFDSYVEPLKLYLQKFR) are b domain. The c domain stretch occupies residues 58–122 (EAMKGEKGIG…ISGVQQIQFS (65 aa)).

Belongs to the NFYB/HAP3 subunit family. In terms of assembly, heterotrimeric transcription factor composed of three components, NF-YA, NF-YB and NF-YC. NF-YB and NF-YC must interact and dimerize for NF-YA association and DNA binding.

It is found in the nucleus. Component of the sequence-specific heterotrimeric transcription factor (NF-Y) which specifically recognizes a 5'-CCAAT-3' box motif found in the promoters of its target genes. NF-Y can function as both an activator and a repressor, depending on its interacting cofactors. The chain is Nuclear transcription factor Y subunit beta (nfyb) from Xenopus laevis (African clawed frog).